The sequence spans 199 residues: Large ribosomal subunit protein uL5 (199 aa).

Belongs to the universal ribosomal protein uL5 family. Part of the 50S ribosomal subunit; part of the 5S rRNA/L5/L18/L25 subcomplex. Contacts the 5S rRNA and the P site tRNA. Forms a bridge to the 30S subunit in the 70S ribosome.

This is one of the proteins that bind and probably mediate the attachment of the 5S RNA into the large ribosomal subunit, where it forms part of the central protuberance. In the 70S ribosome it contacts protein S13 of the 30S subunit (bridge B1b), connecting the 2 subunits; this bridge is implicated in subunit movement. Contacts the P site tRNA; the 5S rRNA and some of its associated proteins might help stabilize positioning of ribosome-bound tRNAs. This Frankia casuarinae (strain DSM 45818 / CECT 9043 / HFP020203 / CcI3) protein is Large ribosomal subunit protein uL5.